A 112-amino-acid polypeptide reads, in one-letter code: MVTEWKNFFKGCCMQLLNVGFGNTVMVGRVVAVVNTGSSPARKIREIAKKNGKLIDVTEGRRTRSMLVMDSNHVVLSSVQSDTISQRLQAMRIDLQLGECREQGKKVYNENE.

It belongs to the RemA family.

This chain is Putative regulatory protein DP2861, found in Desulfotalea psychrophila (strain LSv54 / DSM 12343).